We begin with the raw amino-acid sequence, 255 residues long: Thiazole synthase (255 aa).

K96 acts as the Schiff-base intermediate with DXP in catalysis. 1-deoxy-D-xylulose 5-phosphate-binding positions include G157, 183–184, and 205–206; these read AG and NT.

It belongs to the ThiG family. In terms of assembly, homotetramer. Forms heterodimers with either ThiH or ThiS.

The protein resides in the cytoplasm. It carries out the reaction [ThiS sulfur-carrier protein]-C-terminal-Gly-aminoethanethioate + 2-iminoacetate + 1-deoxy-D-xylulose 5-phosphate = [ThiS sulfur-carrier protein]-C-terminal Gly-Gly + 2-[(2R,5Z)-2-carboxy-4-methylthiazol-5(2H)-ylidene]ethyl phosphate + 2 H2O + H(+). It participates in cofactor biosynthesis; thiamine diphosphate biosynthesis. Functionally, catalyzes the rearrangement of 1-deoxy-D-xylulose 5-phosphate (DXP) to produce the thiazole phosphate moiety of thiamine. Sulfur is provided by the thiocarboxylate moiety of the carrier protein ThiS. In vitro, sulfur can be provided by H(2)S. This is Thiazole synthase from Heliobacterium modesticaldum (strain ATCC 51547 / Ice1).